The sequence spans 209 residues: Peroxiredoxin (209 aa).

Residues 2 to 156 form the Thioredoxin domain; the sequence is PLIGDKFPEM…IVRMIRAFRV (155 aa). C44 acts as the Cysteine sulfenic acid (-SOH) intermediate in catalysis. R119 provides a ligand contact to substrate. A disulfide bridge connects residues C198 and C204.

This sequence belongs to the peroxiredoxin family. Prx6 subfamily. As to quaternary structure, homodecamer. Pentamer of dimers that assemble into a ring structure.

Its subcellular location is the cytoplasm. It carries out the reaction a hydroperoxide + [thioredoxin]-dithiol = an alcohol + [thioredoxin]-disulfide + H2O. Thiol-specific peroxidase that catalyzes the reduction of hydrogen peroxide and organic hydroperoxides to water and alcohols, respectively. Plays a role in cell protection against oxidative stress by detoxifying peroxides. The sequence is that of Peroxiredoxin from Methanothermobacter thermautotrophicus (strain ATCC 29096 / DSM 1053 / JCM 10044 / NBRC 100330 / Delta H) (Methanobacterium thermoautotrophicum).